The primary structure comprises 639 residues: Elongation factor 4 (639 aa).

The 182-residue stretch at 39-220 (AQIRNFCIIA…EVVRLVPPPT (182 aa)) folds into the tr-type G domain. GTP-binding positions include 51–56 (DHGKST) and 167–170 (NKID).

The protein belongs to the TRAFAC class translation factor GTPase superfamily. Classic translation factor GTPase family. LepA subfamily.

The protein resides in the cell membrane. It catalyses the reaction GTP + H2O = GDP + phosphate + H(+). Required for accurate and efficient protein synthesis under certain stress conditions. May act as a fidelity factor of the translation reaction, by catalyzing a one-codon backward translocation of tRNAs on improperly translocated ribosomes. Back-translocation proceeds from a post-translocation (POST) complex to a pre-translocation (PRE) complex, thus giving elongation factor G a second chance to translocate the tRNAs correctly. Binds to ribosomes in a GTP-dependent manner. The polypeptide is Elongation factor 4 (Mycobacterium sp. (strain JLS)).